The following is an 89-amino-acid chain: Small ribosomal subunit protein uS19 (89 aa).

Belongs to the universal ribosomal protein uS19 family.

Functionally, protein S19 forms a complex with S13 that binds strongly to the 16S ribosomal RNA. In Parabacteroides distasonis (strain ATCC 8503 / DSM 20701 / CIP 104284 / JCM 5825 / NCTC 11152), this protein is Small ribosomal subunit protein uS19.